We begin with the raw amino-acid sequence, 697 residues long: Elongation factor G (697 aa).

A tr-type G domain is found at 10–285 (EKTRNIGIVA…GVNDYLPSPL (276 aa)). Residues 19-26 (AHIDAGKT), 83-87 (DTPGH), and 137-140 (NKMD) each bind GTP.

Belongs to the TRAFAC class translation factor GTPase superfamily. Classic translation factor GTPase family. EF-G/EF-2 subfamily.

It localises to the cytoplasm. Functionally, catalyzes the GTP-dependent ribosomal translocation step during translation elongation. During this step, the ribosome changes from the pre-translocational (PRE) to the post-translocational (POST) state as the newly formed A-site-bound peptidyl-tRNA and P-site-bound deacylated tRNA move to the P and E sites, respectively. Catalyzes the coordinated movement of the two tRNA molecules, the mRNA and conformational changes in the ribosome. This is Elongation factor G from Ligilactobacillus salivarius (strain UCC118) (Lactobacillus salivarius).